The chain runs to 234 residues: Phosphoribosylaminoimidazole-succinocarboxamide synthase (234 aa).

It belongs to the SAICAR synthetase family.

It carries out the reaction 5-amino-1-(5-phospho-D-ribosyl)imidazole-4-carboxylate + L-aspartate + ATP = (2S)-2-[5-amino-1-(5-phospho-beta-D-ribosyl)imidazole-4-carboxamido]succinate + ADP + phosphate + 2 H(+). The protein operates within purine metabolism; IMP biosynthesis via de novo pathway; 5-amino-1-(5-phospho-D-ribosyl)imidazole-4-carboxamide from 5-amino-1-(5-phospho-D-ribosyl)imidazole-4-carboxylate: step 1/2. This chain is Phosphoribosylaminoimidazole-succinocarboxamide synthase, found in Streptococcus uberis (strain ATCC BAA-854 / 0140J).